The primary structure comprises 425 residues: Isocitrate dehydrogenase [NADP] (425 aa).

T114 lines the NADP(+) pocket. Residues S123, N125, R129, R139, and R162 each coordinate D-threo-isocitrate. D316 is a binding site for Mg(2+). Residues 348 to 354, N361, Y400, and R404 contribute to the NADP(+) site; that span reads HGTAPKY.

The protein belongs to the isocitrate and isopropylmalate dehydrogenases family. Homodimer. It depends on Mg(2+) as a cofactor. Requires Mn(2+) as cofactor.

The enzyme catalyses D-threo-isocitrate + NADP(+) = 2-oxoglutarate + CO2 + NADPH. Functionally, catalyzes the oxidative decarboxylation of isocitrate to 2-oxoglutarate and carbon dioxide with the concomitant reduction of NADP(+). This Helicobacter pylori (strain ATCC 700392 / 26695) (Campylobacter pylori) protein is Isocitrate dehydrogenase [NADP] (icd).